The primary structure comprises 139 residues: Two-component response regulator 24 (139 aa).

Positions 19 to 134 constitute a Response regulatory domain; sequence TALVVDDSFV…KLLSILHKLN (116 aa). D69 carries the post-translational modification 4-aspartylphosphate.

This sequence belongs to the ARR family. Type-A subfamily. In terms of processing, two-component system major event consists of a His-to-Asp phosphorelay between a sensor histidine kinase (HK) and a response regulator (RR). In plants, the His-to-Asp phosphorelay involves an additional intermediate named Histidine-containing phosphotransfer protein (HPt). This multistep phosphorelay consists of a His-Asp-His-Asp sequential transfer of a phosphate group between first a His and an Asp of the HK protein, followed by the transfer to a conserved His of the HPt protein and finally the transfer to an Asp in the receiver domain of the RR protein. Mostly expressed in flowers and siliques, primarily restricted to pollen grains.

Its subcellular location is the nucleus. Its function is as follows. Functions as a response regulator involved in His-to-Asp phosphorelay signal transduction system. Phosphorylation of the Asp residue in the receiver domain activates the ability of the protein to promote the transcription of target genes. Type-A response regulators seem to act as negative regulators of the cytokinin signaling. This chain is Two-component response regulator 24, found in Arabidopsis thaliana (Mouse-ear cress).